Reading from the N-terminus, the 211-residue chain is Adenylyl-sulfate kinase (211 aa).

36–43 contacts ATP; the sequence is GLSGSGKS. Ser110 acts as the Phosphoserine intermediate in catalysis.

Belongs to the APS kinase family.

It carries out the reaction adenosine 5'-phosphosulfate + ATP = 3'-phosphoadenylyl sulfate + ADP + H(+). The protein operates within sulfur metabolism; hydrogen sulfide biosynthesis; sulfite from sulfate: step 2/3. In terms of biological role, catalyzes the synthesis of activated sulfate. In Buchnera aphidicola subsp. Schizaphis graminum (strain Sg), this protein is Adenylyl-sulfate kinase (cysC).